Reading from the N-terminus, the 496-residue chain is Cytochrome f, chloroplastic (496 aa).

The N-terminal 149 residues, 1 to 149 (MASLQTPVMV…VGAAAGSANA (149 aa)), are a transit peptide targeting the chloroplast. Y150, C170, C173, and H174 together coordinate heme. A helical membrane pass occupies residues 462–481 (VQAFLFFSFTVLATQTLLVV).

The protein belongs to the cytochrome f family. In terms of assembly, interacts with plastocyanin and Rieske iron-sulfur protein. It depends on heme as a cofactor.

Its subcellular location is the plastid. The protein resides in the chloroplast thylakoid membrane. Translocates protons across the thylakoid membrane and transfers electrons from photosystem II to photosystem I. It receives electrons from the Rieske iron-sulfur protein and passes them to plastocyanin. This Euglena gracilis protein is Cytochrome f, chloroplastic (petA).